Reading from the N-terminus, the 141-residue chain is Large ribosomal subunit protein uL11 (141 aa).

This sequence belongs to the universal ribosomal protein uL11 family. Part of the ribosomal stalk of the 50S ribosomal subunit. Interacts with L10 and the large rRNA to form the base of the stalk. L10 forms an elongated spine to which L12 dimers bind in a sequential fashion forming a multimeric L10(L12)X complex. Post-translationally, one or more lysine residues are methylated.

Functionally, forms part of the ribosomal stalk which helps the ribosome interact with GTP-bound translation factors. The chain is Large ribosomal subunit protein uL11 from Campylobacter lari (strain RM2100 / D67 / ATCC BAA-1060).